A 113-amino-acid chain; its full sequence is Large ribosomal subunit protein bL19 (113 aa).

It belongs to the bacterial ribosomal protein bL19 family.

Functionally, this protein is located at the 30S-50S ribosomal subunit interface and may play a role in the structure and function of the aminoacyl-tRNA binding site. This is Large ribosomal subunit protein bL19 from Mycobacterium avium (strain 104).